A 401-amino-acid chain; its full sequence is Cartilage-associated protein (401 aa).

A signal peptide spans 1–26; sequence MEPGRRGAAALLALLCVACALRAGRA. Residues Asn-87 and Asn-363 are each glycosylated (N-linked (GlcNAc...) asparagine).

Belongs to the leprecan family. As to expression, found in articular chondrocytes. Expressed in a variety of tissues.

It is found in the secreted. Its subcellular location is the extracellular space. The protein resides in the extracellular matrix. Its function is as follows. Necessary for efficient 3-hydroxylation of fibrillar collagen prolyl residues. This Homo sapiens (Human) protein is Cartilage-associated protein (CRTAP).